We begin with the raw amino-acid sequence, 216 residues long: Cytidylate kinase (216 aa).

10-18 contributes to the ATP binding site; that stretch reads GPAGAGKST.

This sequence belongs to the cytidylate kinase family. Type 1 subfamily.

It localises to the cytoplasm. The enzyme catalyses CMP + ATP = CDP + ADP. It catalyses the reaction dCMP + ATP = dCDP + ADP. This Clostridioides difficile (strain 630) (Peptoclostridium difficile) protein is Cytidylate kinase.